A 529-amino-acid chain; its full sequence is MQQRRPVRRALLSVSDKAGIIEFAQALSARGVELLSTGGTARLLAEKGLPVTEVSDYTGFPEMMDGRVKTLHPKVHGGILGRRGQDDAIMEQHHIAPIDMVVVNLYLFAETVAREGCSLEDAVENIDIGGPTMVRSAAKNHKDVAIVVKSSDYDAIIKEMDANEGSLTLDTRFDLAIKAFEHTAAYDSMIANYFGSMVPAYHGESKEAAGRFPRTLNLNFIKKQDMRYGENSHQQAAFYIEENVKEASVATAQQVQGKALSYNNIADTDAALECVKAFNEPACVIVKHANPCGVAVSTSILDAYDRAYKTDPTSAFGGIIAFNRELDAETAQAIISRQFVEVIIAPSATEEALKITAAKQNVRVLTCGQWAQRVPGLDFKRVNGGLLVQDRDLGMVSEAELRVVSKRQPTEQELRDALFCWKVAKFVKSNAIVYAKENMTIGIGAGQMSRVYSAKIAGIKAADEGLEVKGSAMASDAFFPFRDGIDAAAAVGVSCVIQPGGSIRDEEVIAAADEHGIAMIFTDMRHFRH.

In terms of domain architecture, MGS-like spans 1-148; sequence MQQRRPVRRA…KNHKDVAIVV (148 aa).

It belongs to the PurH family.

It carries out the reaction (6R)-10-formyltetrahydrofolate + 5-amino-1-(5-phospho-beta-D-ribosyl)imidazole-4-carboxamide = 5-formamido-1-(5-phospho-D-ribosyl)imidazole-4-carboxamide + (6S)-5,6,7,8-tetrahydrofolate. It catalyses the reaction IMP + H2O = 5-formamido-1-(5-phospho-D-ribosyl)imidazole-4-carboxamide. It participates in purine metabolism; IMP biosynthesis via de novo pathway; 5-formamido-1-(5-phospho-D-ribosyl)imidazole-4-carboxamide from 5-amino-1-(5-phospho-D-ribosyl)imidazole-4-carboxamide (10-formyl THF route): step 1/1. It functions in the pathway purine metabolism; IMP biosynthesis via de novo pathway; IMP from 5-formamido-1-(5-phospho-D-ribosyl)imidazole-4-carboxamide: step 1/1. This chain is Bifunctional purine biosynthesis protein PurH, found in Salmonella paratyphi C (strain RKS4594).